We begin with the raw amino-acid sequence, 623 residues long: Pentatricopeptide repeat-containing protein At5g15340, mitochondrial (623 aa).

A mitochondrion-targeting transit peptide spans 1 to 16 (MKCLSYQKVRLLLRHC). PPR repeat units follow at residues 42-72 (RSYL…IPLS), 75-109 (DNVD…RVEI), 110-144 (DDVS…GVLT), 145-179 (SVKV…SVVS), 180-206 (WTVV…MPER), 207-237 (NAVA…MVFR), 243-277 (NFVT…EMMM), 285-319 (DVMV…NVVT), 320-346 (WNAL…MIRE), 350-384 (DDLT…GLEP), and 385-419 (KVDH…PNEV). Residues 420–495 (VLGSLLGSCS…IPGLSSIYVN (76 aa)) are type E motif. The type E(+) motif stretch occupies residues 496–526 (DSVHRFSSGDRSHPRTKEIYLKLNEVIERIR). A type DYW motif region spans residues 527 to 623 (SAGYVPDVSG…GGSCSCSDYW (97 aa)).

This sequence belongs to the PPR family. PCMP-H subfamily.

Its subcellular location is the mitochondrion. This is Pentatricopeptide repeat-containing protein At5g15340, mitochondrial (PCMP-H91) from Arabidopsis thaliana (Mouse-ear cress).